Consider the following 294-residue polypeptide: Small ribosomal subunit biogenesis GTPase RsgA 2, mitochondrial (294 aa).

Residues 1-68 (MQTFSSAAAL…RSFLAPVLPL (68 aa)) constitute a mitochondrion transit peptide. The CP-type G domain occupies 155–294 (VSEVLDPPVA…VSFFLSYFIL (140 aa)). 255–263 (GPSGVGKSS) contributes to the GTP binding site.

It belongs to the TRAFAC class YlqF/YawG GTPase family.

The protein localises to the mitochondrion. This Arabidopsis thaliana (Mouse-ear cress) protein is Small ribosomal subunit biogenesis GTPase RsgA 2, mitochondrial.